Consider the following 445-residue polypeptide: Histidinol dehydrogenase (445 aa).

The NAD(+) site is built by Tyr-144, Gln-205, and Asn-228. Substrate-binding residues include Ser-251, Gln-273, and His-276. Gln-273 and His-276 together coordinate Zn(2+). Catalysis depends on proton acceptor residues Glu-341 and His-342. Substrate contacts are provided by His-342, Asp-375, Glu-429, and His-434. Position 375 (Asp-375) interacts with Zn(2+). Position 434 (His-434) interacts with Zn(2+).

It belongs to the histidinol dehydrogenase family. Zn(2+) serves as cofactor.

It catalyses the reaction L-histidinol + 2 NAD(+) + H2O = L-histidine + 2 NADH + 3 H(+). The protein operates within amino-acid biosynthesis; L-histidine biosynthesis; L-histidine from 5-phospho-alpha-D-ribose 1-diphosphate: step 9/9. Functionally, catalyzes the sequential NAD-dependent oxidations of L-histidinol to L-histidinaldehyde and then to L-histidine. This is Histidinol dehydrogenase from Cupriavidus pinatubonensis (strain JMP 134 / LMG 1197) (Cupriavidus necator (strain JMP 134)).